Consider the following 356-residue polypeptide: Leucoanthocyanidin dioxygenase (356 aa).

Positions 142 and 213 each coordinate substrate. Residues 208–307 (LLLQMKINYY…RISWAVFCEP (100 aa)) form the Fe2OG dioxygenase domain. 215–217 (NYY) provides a ligand contact to 2-oxoglutarate. Position 232 (His232) interacts with Fe cation. Thr233 lines the substrate pocket. Asp234 and His288 together coordinate Fe cation. 298-300 (RIS) contributes to the 2-oxoglutarate binding site. Substrate-binding residues include Glu306 and Lys341.

Belongs to the iron/ascorbate-dependent oxidoreductase family. L-ascorbate is required as a cofactor. Fe(2+) serves as cofactor. As to expression, expressed in young seedlings (at protein level).

The catalysed reaction is a (2R,3S,4S)-leucoanthocyanidin + 2-oxoglutarate + O2 = a 4-H-anthocyanidin with a 3-hydroxy group + succinate + CO2 + 2 H2O. It catalyses the reaction (2R,3S,4S)-3,4-leucopelargonidin + 2-oxoglutarate + O2 = (4S)-2,3-dehydroleucopelargonidin + succinate + CO2 + H2O + H(+). It carries out the reaction (2R,3S,4S)-leucocyanidin + 2-oxoglutarate + O2 = (4S)-2,3-dehydroleucocyanidin + succinate + CO2 + H2O + H(+). Its pathway is pigment biosynthesis; anthocyanin biosynthesis. Involved in anthocyanin and protoanthocyanidin biosynthesis by catalyzing the oxidation of leucoanthocyanidins into anthocyanidins. Possesses low flavonol synthase activity in vitro towards dihydrokaempferol and dihydroquercetin producing kaempferol and quercitin, respectively. This is Leucoanthocyanidin dioxygenase (LDOX) from Arabidopsis thaliana (Mouse-ear cress).